Reading from the N-terminus, the 206-residue chain is Small ribosomal subunit protein uS4 (206 aa).

The S4 RNA-binding domain maps to 96–156 (TRLDNVVYRM…EKSRTQARIK (61 aa)).

Belongs to the universal ribosomal protein uS4 family. Part of the 30S ribosomal subunit. Contacts protein S5. The interaction surface between S4 and S5 is involved in control of translational fidelity.

Its function is as follows. One of the primary rRNA binding proteins, it binds directly to 16S rRNA where it nucleates assembly of the body of the 30S subunit. In terms of biological role, with S5 and S12 plays an important role in translational accuracy. This Shewanella sp. (strain MR-4) protein is Small ribosomal subunit protein uS4.